The following is a 197-amino-acid chain: Peptidyl-tRNA hydrolase (197 aa).

Y18 lines the tRNA pocket. The active-site Proton acceptor is H23. TRNA-binding residues include F69, N71, and N117.

It belongs to the PTH family. Monomer.

It localises to the cytoplasm. The catalysed reaction is an N-acyl-L-alpha-aminoacyl-tRNA + H2O = an N-acyl-L-amino acid + a tRNA + H(+). Functionally, hydrolyzes ribosome-free peptidyl-tRNAs (with 1 or more amino acids incorporated), which drop off the ribosome during protein synthesis, or as a result of ribosome stalling. Its function is as follows. Catalyzes the release of premature peptidyl moieties from peptidyl-tRNA molecules trapped in stalled 50S ribosomal subunits, and thus maintains levels of free tRNAs and 50S ribosomes. This chain is Peptidyl-tRNA hydrolase, found in Tolumonas auensis (strain DSM 9187 / NBRC 110442 / TA 4).